Here is a 382-residue protein sequence, read N- to C-terminus: Histidinol-phosphate aminotransferase (382 aa).

Residue lysine 215 is modified to N6-(pyridoxal phosphate)lysine. Residues 360-382 (NSNNIDNQSKTHSQTSSIRKGTI) are disordered.

The protein belongs to the class-II pyridoxal-phosphate-dependent aminotransferase family. Histidinol-phosphate aminotransferase subfamily. In terms of assembly, homodimer. Pyridoxal 5'-phosphate serves as cofactor.

The enzyme catalyses L-histidinol phosphate + 2-oxoglutarate = 3-(imidazol-4-yl)-2-oxopropyl phosphate + L-glutamate. The protein operates within amino-acid biosynthesis; L-histidine biosynthesis; L-histidine from 5-phospho-alpha-D-ribose 1-diphosphate: step 7/9. This chain is Histidinol-phosphate aminotransferase, found in Yersinia pseudotuberculosis serotype IB (strain PB1/+).